The primary structure comprises 310 residues: Nuclear hormone receptor family member nhr-89 (310 aa).

A DNA-binding region (nuclear receptor) is located at residues 5–79 (EGPCRVCHSV…SGMRRDCVRK (75 aa)). 2 NR C4-type zinc fingers span residues 8–29 (CRVC…CMSC) and 43–67 (CPAN…YNKC). The 210-residue stretch at 101–310 (KLSESYEELL…TLHQKYQIPF (210 aa)) folds into the NR LBD domain.

The protein belongs to the nuclear hormone receptor family.

The protein resides in the nucleus. Its function is as follows. Orphan nuclear receptor. This is Nuclear hormone receptor family member nhr-89 (nhr-89) from Caenorhabditis elegans.